The chain runs to 58 residues: Small integral membrane protein 11 (58 aa).

Residues 9–29 form a helical membrane-spanning segment; sequence FPLLLYILAAKTLILCLAFAG. The stretch at 29-58 forms a coiled coil; the sequence is GVKVYQRKRLEAKQQKVEAEKRKQAEKKES.

The protein resides in the membrane. In Bos taurus (Bovine), this protein is Small integral membrane protein 11 (SMIM11).